We begin with the raw amino-acid sequence, 212 residues long: Thymidylate kinase (212 aa).

G11 to T18 contributes to the ATP binding site.

It belongs to the thymidylate kinase family.

It carries out the reaction dTMP + ATP = dTDP + ADP. Functionally, phosphorylation of dTMP to form dTDP in both de novo and salvage pathways of dTTP synthesis. The sequence is that of Thymidylate kinase from Streptococcus pneumoniae (strain P1031).